The primary structure comprises 811 residues: Receptor-like protein 52 (811 aa).

A signal peptide spans 1 to 22 (MTFLPLLFIFFFLTSIPFPAFS). Over 23–770 (QYNDRSTLLN…EDEEEVMNWT (748 aa)) the chain is Extracellular. Residues N47, N64, N74, N93, N109, and N124 are each glycosylated (N-linked (GlcNAc...) asparagine). 6 LRR repeats span residues 62 to 86 (AGNVTEINFQNQNFTGTVPTTICNF), 87 to 110 (PNLKSLNLSFNYFAGEFPTVLYNC), 112 to 134 (KLQYLDLSQNLFNGSLPDDINRL), 135 to 159 (APKLKYLDLAANSFAGDIPKNIGRI), 161 to 183 (KLKVLNLYMSEYDGTFPSEIGDL), and 184 to 208 (SELEELQLALNDKFTPVKLPTEFGK). An LRR 7; degenerate repeat occupies 211-233 (KLKYMWLEEMNLIGEISAVVFEN). N-linked (GlcNAc...) asparagine glycosylation is found at N233, N246, N260, N295, and N304. LRR repeat units lie at residues 234-258 (MTDLKHVDLSVNNLTGRIPDVLFGL), 260-281 (NLTELYLFANDLTGEIPKSISA), 282-305 (KNLVHLDLSANNLNGSIPESIGNL), 307-329 (NLELLYLFVNELTGEIPRAIGKL), 330-354 (PELKELKLFTNKLTGEIPAEIGFIS), 356-377 (LERFEVSENQLTGKLPENLCHG), 379-401 (KLQSVIVYSNNLTGEIPESLGDC), and 403-427 (TLSSVLLQNNGFSGSVTISNNTRSN). N389, N422, N429, N455, N464, and N485 each carry an N-linked (GlcNAc...) asparagine glycan. LRR repeat units lie at residues 441–465 (LHSLILLDLSTNKFNGSIPRCIANL), 466–489 (STLEVLNLGKNHLSGSIPENISTS), 491–511 (KSIDIGHNQLAGKLPRSLVRI), 512–537 (SSLEVLNVESNKINDTFPFWLDSMQQ), 539–557 (QVLVLRSNAFHGSINQNGF), 558–581 (SKLRIIDISGNHFNGTLPLDFFVN), 625–649 (LNTFTTIDFSGNKFEGEIPRSVGLL), 650–673 (KELHVLNLSNNGFTGHIPSSMGNL), 674–697 (IELESLDVSQNKLSGEIPPELGKL), and 699–722 (YLAYMNFSQNQFVGLVPGGTQFQT). A glycan (N-linked (GlcNAc...) asparagine) is linked at N525. Residues N571 and N581 are each glycosylated (N-linked (GlcNAc...) asparagine). N-linked (GlcNAc...) asparagine glycosylation occurs at N656. N704 carries an N-linked (GlcNAc...) asparagine glycan. A helical membrane pass occupies residues 771–791 (AAAIGSIPGISIGLTMGYILV). Over 792 to 811 (SYKPEWLMNSGRNKRRIKPI) the chain is Cytoplasmic.

It belongs to the RLP family.

It localises to the cell membrane. In terms of biological role, required for defense against powdery mildew pathogen. The sequence is that of Receptor-like protein 52 from Arabidopsis thaliana (Mouse-ear cress).